A 524-amino-acid polypeptide reads, in one-letter code: Probable cytochrome P450 12c1, mitochondrial (524 aa).

Cys-470 is a heme binding site.

This sequence belongs to the cytochrome P450 family. The cofactor is heme.

It localises to the mitochondrion membrane. This Drosophila melanogaster (Fruit fly) protein is Probable cytochrome P450 12c1, mitochondrial (Cyp12c1).